We begin with the raw amino-acid sequence, 700 residues long: Choline transporter-like protein 5-B (700 aa).

Topologically, residues 1-4 (GCTD) are cytoplasmic. A helical membrane pass occupies residues 5-25 (VLCCVIFVIVILGYIVLGTVA). Residues 26 to 209 (WMHGDPRKVV…KIFEDYASSW (184 aa)) are Extracellular-facing. N-linked (GlcNAc...) asparagine glycans are attached at residues asparagine 157 and asparagine 164. Residues 210 to 230 (FWILIGLVISMLVSLVFILLL) form a helical membrane-spanning segment. Topologically, residues 231 to 233 (RFT) are cytoplasmic. Residues 234–254 (AGVLFWLVIFGVIAAVGYGIW) traverse the membrane as a helical segment. At 255-292 (HCYWEYSSLKGKPDSDVTISDIGFQTDFRVYLQLSQTW) the chain is on the extracellular side. The helical transmembrane segment at 293 to 313 (LIFMTSLAVIEAIIILVLIFL) threads the bilayer. Topologically, residues 314-341 (RNRVRIAIALLKEGSKAIGCIMSTLFYP) are cytoplasmic. Residues 342–362 (IITFLLLALCIAYWAVTAVFL) traverse the membrane as a helical segment. The Extracellular portion of the chain corresponds to 363-432 (ASSGEAVYKV…LQLCNLLVFL (70 aa)). Residues asparagine 383 and asparagine 395 are each glycosylated (N-linked (GlcNAc...) asparagine). A helical membrane pass occupies residues 433-455 (WLVNFTIALGQCTLAGAFAAYYW). Residues 456–482 (ALRKPADIPPCPLASSFGRALRYHTGS) are Cytoplasmic-facing. Residues 483–503 (LAFGALILSIVQFIRIILEYL) form a helical membrane-spanning segment. Residues 504-541 (DHKLKGAHNAFTRFLLCCLKCCFWCLEHFIKFMNRNAY) lie on the Extracellular side of the membrane. A helical transmembrane segment spans residues 542–562 (IMISIYGKNFCTSARDAFFLL). The Cytoplasmic portion of the chain corresponds to 563-577 (MRNVMRVAVLDKVTD). A helical transmembrane segment spans residues 578 to 598 (FLLFLGKLLISGSVGVLAFFF). Over 599–616 (FTRQIPVIQEEVPSLNYY) the chain is Extracellular. Residues 617 to 637 (WVPLLTVIFGSYMIAHGFFNV) traverse the membrane as a helical segment. The Cytoplasmic segment spans residues 638 to 687 (YAMCVDTLFLCFLLDLEKNDGSATRPYYMCSSLRAILNKKNQKRPKETKR). The tract at residues 676 to 700 (KKNQKRPKETKRGRKQKKEQPKSRH) is disordered. Residues 677–692 (KNQKRPKETKRGRKQK) show a composition bias toward basic residues.

The protein belongs to the CTL (choline transporter-like) family.

It localises to the cell membrane. It carries out the reaction choline(out) + n H(+)(in) = choline(in) + n H(+)(out). Choline/H+ antiporter. The polypeptide is Choline transporter-like protein 5-B (slc44a5b) (Danio rerio (Zebrafish)).